The chain runs to 275 residues: MSAQQSQSRKTTTAIRQAKGPGKVVALTAYTAPMARQLDPHADLLLVGDSLGMVVYGLPSTLGVTLDMMIAHGAAVVRGSTQACVVVDLPFGSYQASPMQAFESAARVLAETGAQAVKLEGGVEMAETVQFLTARGVPVVSHIGLMPQQVNTVGGYKAQGMQADGSERILRDAQALQEAGAFALVVECTAEAVGRRVTEALQIPVIGIGASPACDGQILVTEDMLGMSGARVPRFVKQYAQLGDEIGRAAQRYAQDVRAGAFPAPEHCFGVQAKA.

Positions 49 and 88 each coordinate Mg(2+). 3-methyl-2-oxobutanoate contacts are provided by residues 49 to 50, Asp-88, and Lys-118; that span reads DS. Mg(2+) is bound at residue Glu-120. Glu-187 (proton acceptor) is an active-site residue.

This sequence belongs to the PanB family. Homodecamer; pentamer of dimers. Mg(2+) serves as cofactor.

The protein localises to the cytoplasm. The catalysed reaction is 3-methyl-2-oxobutanoate + (6R)-5,10-methylene-5,6,7,8-tetrahydrofolate + H2O = 2-dehydropantoate + (6S)-5,6,7,8-tetrahydrofolate. It participates in cofactor biosynthesis; (R)-pantothenate biosynthesis; (R)-pantoate from 3-methyl-2-oxobutanoate: step 1/2. Functionally, catalyzes the reversible reaction in which hydroxymethyl group from 5,10-methylenetetrahydrofolate is transferred onto alpha-ketoisovalerate to form ketopantoate. The polypeptide is 3-methyl-2-oxobutanoate hydroxymethyltransferase (Bordetella petrii (strain ATCC BAA-461 / DSM 12804 / CCUG 43448)).